The following is a 226-amino-acid chain: DELTA-thalatoxin-Avl1b (226 aa).

The signal sequence occupies residues 1–21 (MRHFVVFLYMFLALSIPTAFA). The propeptide occupies 22-45 (KKHIVTKKGNHQDITNDNEGENAE). Residues 50–59 (AVAGAVIAGG) form a plays an important role in the hemolytic activity region. The N-terminal region stretch occupies residues 58–77 (GGELALKILTKILDEIGKID). Phosphocholine contacts are provided by serine 101, valine 134, serine 152, proline 154, tyrosine 180, and tyrosine 184. The segment at 152-167 (SVPFDYNLYTNWWNVK) is trp-rich region, which is important for the binding to lipid membrane. Residues 191–193 (KPS) carry the Cell attachment site, crucial for protein stability motif.

The protein belongs to the actinoporin family. Sea anemone subfamily. Octamer or nonamer in membranes. Monomer in the soluble state.

The protein resides in the secreted. The protein localises to the nematocyst. Its subcellular location is the target cell membrane. Functionally, pore-forming protein that forms cations-selective hydrophilic pores of around 1 nm and causes cytolysis. Pore formation is a multi-step process that involves specific recognition of membrane sphingomyelin (but neither cholesterol nor phosphatidylcholine) using aromatic rich region and adjacent phosphocholine (POC) binding site, firm binding to the membrane (mainly driven by hydrophobic interactions) accompanied by the transfer of the N-terminal region to the lipid-water interface and finally pore formation after oligomerization of monomers. This chain is DELTA-thalatoxin-Avl1b, found in Actineria villosa (Okinawan sea anemone).